The following is a 204-amino-acid chain: Probable GTP-binding protein EngB (204 aa).

The EngB-type G domain maps to 22 to 197; the sequence is GFPEIAFVGR…LAEFDNVLSI (176 aa). GTP contacts are provided by residues 30-37, 57-61, 75-78, 144-147, and 176-178; these read GRSNVGKS, GKTRQ, DLPG, NKVD, and FSA. Residues serine 37 and threonine 59 each coordinate Mg(2+).

The protein belongs to the TRAFAC class TrmE-Era-EngA-EngB-Septin-like GTPase superfamily. EngB GTPase family. It depends on Mg(2+) as a cofactor.

In terms of biological role, necessary for normal cell division and for the maintenance of normal septation. This chain is Probable GTP-binding protein EngB, found in Ruminiclostridium cellulolyticum (strain ATCC 35319 / DSM 5812 / JCM 6584 / H10) (Clostridium cellulolyticum).